The primary structure comprises 110 residues: uncharacterized protein (110 aa).

This is an uncharacterized protein from Saccharomyces cerevisiae (strain ATCC 204508 / S288c) (Baker's yeast).